A 53-amino-acid chain; its full sequence is Rubredoxin-1 (53 aa).

The Rubredoxin-like domain occupies M1–E53. Residues C6, C9, C39, and C42 each contribute to the Fe cation site.

Belongs to the rubredoxin family. Fe(3+) serves as cofactor.

Its function is as follows. Rubredoxin is a small nonheme, iron protein lacking acid-labile sulfide. Its single Fe, chelated to 4 Cys, functions as an electron acceptor and may also stabilize the conformation of the molecule. This is Rubredoxin-1 (rubR1) from Clostridium perfringens (strain 13 / Type A).